A 331-amino-acid polypeptide reads, in one-letter code: DNA-directed RNA polymerase subunit alpha (331 aa).

The alpha N-terminal domain (alpha-NTD) stretch occupies residues 1 to 233 (MVREKVTVST…DLFIPFLHAE (233 aa)). The interval 265–331 (KEIELKYIFI…GILEKHFTID (67 aa)) is alpha C-terminal domain (alpha-CTD).

It belongs to the RNA polymerase alpha chain family. As to quaternary structure, in plastids the minimal PEP RNA polymerase catalytic core is composed of four subunits: alpha, beta, beta', and beta''. When a (nuclear-encoded) sigma factor is associated with the core the holoenzyme is formed, which can initiate transcription.

The protein localises to the plastid. It localises to the chloroplast. The enzyme catalyses RNA(n) + a ribonucleoside 5'-triphosphate = RNA(n+1) + diphosphate. DNA-dependent RNA polymerase catalyzes the transcription of DNA into RNA using the four ribonucleoside triphosphates as substrates. In Vitis vinifera (Grape), this protein is DNA-directed RNA polymerase subunit alpha.